A 139-amino-acid polypeptide reads, in one-letter code: 10 kDa chaperonin 2, chloroplastic (139 aa).

Residues 1–39 constitute a chloroplast transit peptide; sequence MASTFVCSLPNPFFAFPVKATTPSTANHTLLGSRRGCLR. Positions 51–138 are cpn-10 domain; it reads KVVPQADRVL…CKESDLLALV (88 aa).

Belongs to the GroES chaperonin family. Expressed in leaves and stems. Expressed at low levels in germinating seeds, seedlings, rosettes leaves, flowers and siliques.

The protein localises to the plastid. It localises to the chloroplast stroma. Functions as a co-chaperone for protein folding in chloroplasts. This is 10 kDa chaperonin 2, chloroplastic from Arabidopsis thaliana (Mouse-ear cress).